Here is a 270-residue protein sequence, read N- to C-terminus: uncharacterized protein (270 aa).

A divalent metal cation is bound by residues Asp-53, His-55, Asp-83, Asn-116, His-207, and His-209.

It belongs to the metallophosphoesterase superfamily. Requires a divalent metal cation as cofactor.

This is an uncharacterized protein from Bacillus subtilis (strain 168).